The sequence spans 1179 residues: Integrin alpha-E (1179 aa).

A signal peptide spans 1–18 (MWLFHTLLCIASLALLAA). Residues 19-1124 (FNVDVARPWL…VFLKDEKYHS (1106 aa)) are Extracellular-facing. 2 FG-GAP repeats span residues 22 to 79 (DVAR…EILC) and 80 to 138 (HPVE…PQAQ). N-linked (GlcNAc...) asparagine glycosylation is present at N49. Cystine bridges form between C70–C79 and C126–C159. The tract at residues 145-199 (ENLLDPDARVDTGDCYSNKEGGGEDDVNTARQRRALEKEEEEDKEEEEDEEEEEA) is X-domain (extra domain). The segment at 158–200 (DCYSNKEGGGEDDVNTARQRRALEKEEEEDKEEEEDEEEEEAG) is disordered. Over residues 182–200 (KEEEEDKEEEEDEEEEEAG) the composition is skewed to acidic residues. The VWFA domain maps to 200 to 389 (GTEIAIILDG…SKLRYNIISM (190 aa)). N-linked (GlcNAc...) asparagine glycosylation is found at N271 and N321. One copy of the FG-GAP 3 repeat lies at 390–442 (EGTVGDALHYQLAQIGFSAQILDERQVLLGAVGAFDWSGGALLYDTRSRRGRF). N444 carries N-linked (GlcNAc...) asparagine glycosylation. FG-GAP repeat units follow at residues 447–499 (AAAA…GREA), 500–560 (SFLP…DGSF), 563–627 (ARIL…GLSA), and 631–691 (QRIR…FTPS). Ca(2+) contacts are provided by D522, D524, D526, D530, D586, S588, D590, D594, D654, S656, D658, and D662. A disulfide bond links C706 and C762. N-linked (GlcNAc...) asparagine glycosylation is found at N726 and N782. Residues C823 and C829 are joined by a disulfide bond. N857 carries N-linked (GlcNAc...) asparagine glycosylation. An intrachain disulfide couples C893 to C907. N-linked (GlcNAc...) asparagine glycosylation is found at N934 and N954. Intrachain disulfides connect C1008–C1033 and C1041–C1057. Residues N1065 and N1096 are each glycosylated (N-linked (GlcNAc...) asparagine). The chain crosses the membrane as a helical span at residues 1125-1147 (LPIIIKGSVGGLLVLIVILVILF). At 1148–1179 (KCGFFKRKYQQLNLESIRKAQLKSENLLEEEN) the chain is on the cytoplasmic side. The GFFKR motif motif lies at 1150 to 1154 (GFFKR).

Belongs to the integrin alpha chain family. In terms of assembly, heterodimer of an alpha and a beta subunit. The alpha subunit is composed of a heavy and a light chains linked by a disulfide bond. Alpha-E associates with beta-7. Expressed on a subclass of T-lymphocytes known as intra-epithelial lymphocytes which are located between mucosal epithelial cells.

The protein resides in the membrane. Functionally, integrin alpha-E/beta-7 is a receptor for E-cadherin. It mediates adhesion of intra-epithelial T-lymphocytes to epithelial cell monolayers. The protein is Integrin alpha-E (ITGAE) of Homo sapiens (Human).